The primary structure comprises 110 residues: Large ribosomal subunit protein uL22 (110 aa).

This sequence belongs to the universal ribosomal protein uL22 family. Part of the 50S ribosomal subunit.

Functionally, this protein binds specifically to 23S rRNA; its binding is stimulated by other ribosomal proteins, e.g. L4, L17, and L20. It is important during the early stages of 50S assembly. It makes multiple contacts with different domains of the 23S rRNA in the assembled 50S subunit and ribosome. The globular domain of the protein is located near the polypeptide exit tunnel on the outside of the subunit, while an extended beta-hairpin is found that lines the wall of the exit tunnel in the center of the 70S ribosome. In Shewanella baltica (strain OS223), this protein is Large ribosomal subunit protein uL22.